A 127-amino-acid chain; its full sequence is Large ribosomal subunit protein bL17 (127 aa).

It belongs to the bacterial ribosomal protein bL17 family. Part of the 50S ribosomal subunit. Contacts protein L32.

The polypeptide is Large ribosomal subunit protein bL17 (Leuconostoc mesenteroides subsp. mesenteroides (strain ATCC 8293 / DSM 20343 / BCRC 11652 / CCM 1803 / JCM 6124 / NCDO 523 / NBRC 100496 / NCIMB 8023 / NCTC 12954 / NRRL B-1118 / 37Y)).